Here is a 712-residue protein sequence, read N- to C-terminus: Lactoperoxidase (712 aa).

The N-terminal stretch at 1–22 (MWVCLQLPVFLASVTLFEVAAS) is a signal peptide. Residues 23-100 (DTIAQAASTT…WEESFKRLRR (78 aa)) constitute a propeptide that is removed on maturation. An N-linked (GlcNAc...) (complex) asparagine; alternate glycan is attached at Asn-106. Residue Asn-106 is glycosylated (N-linked (GlcNAc...) (hybrid) asparagine; alternate). Intrachain disulfides connect Cys-123–Cys-284, Cys-132–Cys-145, Cys-246–Cys-256, and Cys-250–Cys-274. Residue Asn-212 is glycosylated (N-linked (GlcNAc...) (complex) asparagine; alternate). Asn-212 is a glycosylation site (N-linked (GlcNAc...) (high mannose) asparagine; alternate). Asp-225 lines the heme b pocket. Residue His-226 is the Proton acceptor of the active site. Position 227 (Asp-227) interacts with Ca(2+). Positions 301, 303, 305, and 307 each coordinate Ca(2+). Position 315 is a phosphoserine (Ser-315). Asn-322 carries N-linked (GlcNAc...) (high mannose) asparagine glycosylation. The cysteines at positions 354 and 365 are disulfide-linked. Asn-358 carries N-linked (GlcNAc...) asparagine glycosylation. Glu-375 serves as a coordination point for heme b. N-linked (GlcNAc...) (complex) asparagine; alternate glycosylation occurs at Asn-449. The N-linked (GlcNAc...) (hybrid) asparagine; alternate glycan is linked to Asn-449. An N-linked (GlcNAc...) (high mannose) asparagine; alternate glycan is attached at Asn-449. A heme b-binding site is contributed by His-468. Tyr-482 carries the post-translational modification 3'-nitrotyrosine. 2 disulfide bridges follow: Cys-573/Cys-630 and Cys-671/Cys-696.

Belongs to the peroxidase family. XPO subfamily. Requires Ca(2+) as cofactor. Heme b is required as a cofactor. In terms of tissue distribution, mammary gland; milk.

It localises to the secreted. The protein resides in the cytoplasm. The catalysed reaction is 2 a phenolic donor + H2O2 = 2 a phenolic radical donor + 2 H2O. It catalyses the reaction thiocyanate + H2O2 + H(+) = hypothiocyanous acid + H2O. The enzyme catalyses iodide + H2O2 = hypoiodite + H2O. Functionally, heme-containing oxidoreductase which catalyzes the conversion of thiocyanate (SCN(-)) into antimicrobial agent hypothiocyanous acid (OSCN(-)) in the presence of hydrogen peroxide (H2O2). Also involved in the conversion of iodide (I(-)) into hypoiodite (IO(-)) in the presence of H2O2. Responsible for the inactivation of a wide range of micro-organisms and hence, important component of defense mechanism. Shows antibacterial properties against E.coli, K.pneumoniae, P.aeruginosa, S.sonnei, S.saphrophyticus, S.epidermidis and S.dysenteriae. May protect the udder from infection and may promote growth in newborns. May be implicated in airway host defense against infection. May contribute to maintaining an appropriate H2O2 cellular level, therefore protecting cells from H2O2-caused injuries and inflammation. The protein is Lactoperoxidase of Bubalus bubalis (Domestic water buffalo).